Reading from the N-terminus, the 254-residue chain is Switch-activating protein 1 (254 aa).

Basic and acidic residues predominate over residues 1–10; the sequence is MEAPKMELKS. A disordered region spans residues 1–30; it reads MEAPKMELKSYKRKNASLSPSSSPAKAQRT. A compositionally biased stretch (low complexity) spans 16-25; sequence ASLSPSSSPA. Residues Ser-17 and Ser-19 each carry the phosphoserine modification. Repeat copies occupy residues 221 to 224, 225 to 228, 229 to 232, and 233 to 236. The tract at residues 221 to 236 is 4 X 4 AA tandem repeats of G-[ATV]-N-M; it reads GVNMGTNMGANMGANM.

Homodimer.

The protein resides in the nucleus. Functionally, binds to sequences required for mating-type switching. Makes a simultaneous contact with both the alpha and beta domains of the switch-activating site SAS1. Also binds to replication fork barrier 1 (RFB1) located within a 78 base pair sequence near the 3' end of the rRNA coding region. This leads to replication fork blockage. It binds the consensus sequence 5'-TA[AG]GCAGNTN[CT]AACG[AC]G-3'. In terms of biological role, has a role in chromosome organization and integrity where it is involved in chromosome segregation. Has a role in sister chromatid cohesion and condensation. In Schizosaccharomyces pombe (strain 972 / ATCC 24843) (Fission yeast), this protein is Switch-activating protein 1 (sap1).